Here is a 161-residue protein sequence, read N- to C-terminus: Nucleotide-binding protein Bphyt_3208 (161 aa).

It belongs to the YajQ family.

Nucleotide-binding protein. The protein is Nucleotide-binding protein Bphyt_3208 of Paraburkholderia phytofirmans (strain DSM 17436 / LMG 22146 / PsJN) (Burkholderia phytofirmans).